We begin with the raw amino-acid sequence, 504 residues long: Arabinose import ATP-binding protein AraG (504 aa).

ABC transporter domains follow at residues 8-243 (LSFR…MVGR) and 256-499 (YGEE…MPKV). 40–47 (GENGAGKS) lines the ATP pocket.

The protein belongs to the ABC transporter superfamily. Arabinose importer (TC 3.A.1.2.2) family. The complex is composed of two ATP-binding proteins (AraG), two transmembrane proteins (AraH) and a solute-binding protein (AraF).

Its subcellular location is the cell inner membrane. The enzyme catalyses L-arabinose(out) + ATP + H2O = L-arabinose(in) + ADP + phosphate + H(+). Functionally, part of the ABC transporter complex AraFGH involved in arabinose import. Responsible for energy coupling to the transport system. The sequence is that of Arabinose import ATP-binding protein AraG from Shigella flexneri.